Here is a 450-residue protein sequence, read N- to C-terminus: Chromosomal replication initiator protein DnaA (450 aa).

The tract at residues Met1–Ile79 is domain I, interacts with DnaA modulators. A domain II region spans residues Ile79 to Ser111. Residues Met112 to Ser328 are domain III, AAA+ region. The ATP site is built by Gly156, Gly158, Lys159, and Thr160. The segment at Ser329–Leu450 is domain IV, binds dsDNA.

Belongs to the DnaA family. As to quaternary structure, oligomerizes as a right-handed, spiral filament on DNA at oriC.

It is found in the cytoplasm. Plays an essential role in the initiation and regulation of chromosomal replication. ATP-DnaA binds to the origin of replication (oriC) to initiate formation of the DNA replication initiation complex once per cell cycle. Binds the DnaA box (a 9 base pair repeat at the origin) and separates the double-stranded (ds)DNA. Forms a right-handed helical filament on oriC DNA; dsDNA binds to the exterior of the filament while single-stranded (ss)DNA is stabiized in the filament's interior. The ATP-DnaA-oriC complex binds and stabilizes one strand of the AT-rich DNA unwinding element (DUE), permitting loading of DNA polymerase. After initiation quickly degrades to an ADP-DnaA complex that is not apt for DNA replication. Binds acidic phospholipids. In Geobacillus sp. (strain WCH70), this protein is Chromosomal replication initiator protein DnaA.